A 147-amino-acid chain; its full sequence is Ubiquitin-conjugating enzyme E2 4 (147 aa).

The region spanning 1 to 147 is the UBC core domain; sequence MALKRINREL…AREWTRKYAI (147 aa). Cysteine 85 acts as the Glycyl thioester intermediate in catalysis.

It belongs to the ubiquitin-conjugating enzyme family. In terms of assembly, interacts with the E1 ubiquitin-activating enzyme ptr3 and E3 ubiquitin-protein ligase pub2.

It catalyses the reaction S-ubiquitinyl-[E1 ubiquitin-activating enzyme]-L-cysteine + [E2 ubiquitin-conjugating enzyme]-L-cysteine = [E1 ubiquitin-activating enzyme]-L-cysteine + S-ubiquitinyl-[E2 ubiquitin-conjugating enzyme]-L-cysteine.. Its pathway is protein modification; protein ubiquitination. E2 ubiquitin-conjugating enzyme that catalyzes the covalent attachment of ubiquitin to other proteins. Mediates the selective degradation of short-lived and abnormal proteins. Mediates ubiquitination of pex5. The protein is Ubiquitin-conjugating enzyme E2 4 (ubc4) of Schizosaccharomyces pombe (strain 972 / ATCC 24843) (Fission yeast).